The sequence spans 334 residues: Fructose-1,6-bisphosphatase class 1 (334 aa).

Mg(2+) contacts are provided by E89, D112, L114, and D115. Residues 115–118, N208, Y241, and K271 each bind substrate; that span reads DGSS. Position 277 (E277) interacts with Mg(2+).

This sequence belongs to the FBPase class 1 family. In terms of assembly, homotetramer. Mg(2+) serves as cofactor.

It localises to the cytoplasm. It catalyses the reaction beta-D-fructose 1,6-bisphosphate + H2O = beta-D-fructose 6-phosphate + phosphate. It participates in carbohydrate biosynthesis; gluconeogenesis. The chain is Fructose-1,6-bisphosphatase class 1 from Photorhabdus laumondii subsp. laumondii (strain DSM 15139 / CIP 105565 / TT01) (Photorhabdus luminescens subsp. laumondii).